Here is a 27-residue protein sequence, read N- to C-terminus: Phospholipase A2 P-elapitoxin-Aa1a alpha chain (27 aa).

The protein belongs to the phospholipase A2 family. Group I subfamily. In terms of assembly, heterotrimer of alpha, beta and gamma chains, each related to PLA2. Requires Ca(2+) as cofactor. As to expression, expressed by the venom gland.

Its subcellular location is the secreted. It carries out the reaction a 1,2-diacyl-sn-glycero-3-phosphocholine + H2O = a 1-acyl-sn-glycero-3-phosphocholine + a fatty acid + H(+). In terms of biological role, heterotrimer: presynaptic neurotoxin. Inhibits nerve-evoked twitch contractions but not responses to cholinergic agonists acetylcholine and carbachol and to depolarizing agonist KCl. Causes a fade in tetanic contractions. Displays a triphasic mode of action with depression, enhancement and blockade of neurotransmission. Does not display myotoxic activity such as changes in baseline muscle tension or inhibition of directly stimulated muscle twitches. All subunits are necessary for maximum toxicity. Its function is as follows. Monomer: Snake venom phospholipase A2 (PLA2) alpha chain that has enzymatic activity. PLA2 catalyzes the calcium-dependent hydrolysis of the 2-acyl groups in 3-sn-phosphoglycerides. The chain is Phospholipase A2 P-elapitoxin-Aa1a alpha chain from Acanthophis antarcticus (Common death adder).